We begin with the raw amino-acid sequence, 384 residues long: S-adenosylmethionine synthase (384 aa).

His15 contributes to the ATP binding site. Asp17 lines the Mg(2+) pocket. Glu43 is a binding site for K(+). L-methionine contacts are provided by Glu56 and Gln99. Positions 99 to 109 (QSADINQGVDR) are flexible loop. ATP contacts are provided by residues 164 to 166 (DAK), 230 to 231 (RF), Asp239, 245 to 246 (RK), Ala262, and Lys266. L-methionine is bound at residue Asp239. Lys270 lines the L-methionine pocket.

This sequence belongs to the AdoMet synthase family. In terms of assembly, homotetramer; dimer of dimers. Mg(2+) serves as cofactor. The cofactor is K(+).

The protein localises to the cytoplasm. The catalysed reaction is L-methionine + ATP + H2O = S-adenosyl-L-methionine + phosphate + diphosphate. Its pathway is amino-acid biosynthesis; S-adenosyl-L-methionine biosynthesis; S-adenosyl-L-methionine from L-methionine: step 1/1. Catalyzes the formation of S-adenosylmethionine (AdoMet) from methionine and ATP. The overall synthetic reaction is composed of two sequential steps, AdoMet formation and the subsequent tripolyphosphate hydrolysis which occurs prior to release of AdoMet from the enzyme. The protein is S-adenosylmethionine synthase of Haemophilus influenzae (strain PittGG).